A 638-amino-acid chain; its full sequence is 1-deoxy-D-xylulose-5-phosphate synthase (638 aa).

Thiamine diphosphate is bound by residues His-76 and 117-119 (AHS). A Mg(2+)-binding site is contributed by Asp-148. Residues 149–150 (GS), Asn-177, Tyr-287, and Glu-369 contribute to the thiamine diphosphate site. Residue Asn-177 coordinates Mg(2+).

It belongs to the transketolase family. DXPS subfamily. Homodimer. Mg(2+) is required as a cofactor. Thiamine diphosphate serves as cofactor.

The enzyme catalyses D-glyceraldehyde 3-phosphate + pyruvate + H(+) = 1-deoxy-D-xylulose 5-phosphate + CO2. It functions in the pathway metabolic intermediate biosynthesis; 1-deoxy-D-xylulose 5-phosphate biosynthesis; 1-deoxy-D-xylulose 5-phosphate from D-glyceraldehyde 3-phosphate and pyruvate: step 1/1. Its function is as follows. Catalyzes the acyloin condensation reaction between C atoms 2 and 3 of pyruvate and glyceraldehyde 3-phosphate to yield 1-deoxy-D-xylulose-5-phosphate (DXP). The polypeptide is 1-deoxy-D-xylulose-5-phosphate synthase (Rhodopseudomonas palustris (strain BisB5)).